The primary structure comprises 274 residues: Large ribosomal subunit protein uL2cz/uL2cy (274 aa).

The disordered stretch occupies residues 224–252; it reads NPVDHPHGGGEGRAPIGRKKPVTPWGYPA.

Belongs to the universal ribosomal protein uL2 family. In terms of assembly, part of the 50S ribosomal subunit.

It is found in the plastid. Its subcellular location is the chloroplast. The chain is Large ribosomal subunit protein uL2cz/uL2cy (rpl2-A) from Capsella bursa-pastoris (Shepherd's purse).